The following is a 301-amino-acid chain: Small ribosomal subunit protein uS2 (301 aa).

Belongs to the universal ribosomal protein uS2 family. As to quaternary structure, component of the small ribosomal subunit. Mature ribosomes consist of a small (40S) and a large (60S) subunit. The 40S subunit contains about 33 different proteins and 1 molecule of RNA (18S). The 60S subunit contains about 49 different proteins and 3 molecules of RNA (25S, 5.8S and 5S). Interacts with RPS21.

It is found in the cytoplasm. Its function is as follows. Required for the assembly and/or stability of the 40S ribosomal subunit. Required for the processing of the 20S rRNA-precursor to mature 18S rRNA in a late step of the maturation of 40S ribosomal subunits. The sequence is that of Small ribosomal subunit protein uS2 from Ajellomyces dermatitidis (strain ER-3 / ATCC MYA-2586) (Blastomyces dermatitidis).